The following is a 719-amino-acid chain: Protein lin-15A (719 aa).

4 disordered regions span residues phenylalanine 179–glutamine 199, tyrosine 419–tryptophan 464, leucine 559–threonine 626, and alanine 684–phenylalanine 719. The span at serine 570–serine 579 shows a compositional bias: low complexity. Over residues leucine 604–proline 617 the composition is skewed to polar residues. The span at glutamate 693–phenylalanine 719 shows a compositional bias: basic and acidic residues.

The protein resides in the nucleus. In terms of biological role, synthetic multivulva (synMuv) class A protein. SynMuv proteins are required to repress the induction of vulval development. Acts redundantly with SynMuv class B protein lin-15B, and lin-35 to negatively regulate vulval development, most likely through antagonization of the Ras-signaling pathway. May also negatively regulate vulval development in association with other SynMuv class B proteins such as dpl-1 and efl-1. Regulates let-23 basal activity. Required for the correct expression and/or stability of lin-56. The polypeptide is Protein lin-15A (Caenorhabditis elegans).